Reading from the N-terminus, the 715-residue chain is MADAQDTYSYDAPSIFNFSSFHDDHNADSWFDQLTNAENIPPDQKPLSETSVNAEQNCKVEPGKITPSKEEVSKSTTHVCDVKSQTKRSARRMSKKHRQKILLKMKETHLEKETAQSEYPPCKKLKGSSTKDRQAPVIRGQPTSSHHGTTSPKPKAQLTMPATPTVLKRRNILAKSKSSEEQELEKMQALQKEMLENLKKNEHSMKVAISGAGQPVKNFIPVTKPVDFHFKTDDRLKRNANPPEGDGYKEVDFASVLRKPPTSPVQVTKGGHTVPKPFNLSKGKRKHEEASDFVSTAEQVVAFYRRTPARYHLRSRQKEMEGPSPVKMLKPKLTNPKTPLLQTKQRHRPTTCKSAAELEAEELDMIHQYKFKAQELDTRILEGGPVLPKKPSVKEPTKAIGFDLEIEKRIQQREKKDEVEEEAFSFHSRPCPSKILADVVGVPQKKLLPVTVPQSPAFALKNRVRIPAQEEKEEEVPVIKATRMPHYGVPFKPKLVEQKQVEACPFSFCERDKERQLQKEKRLDELRKEEVPKFKAQRLPQFDHISLPEKKVKMPTQQEPFQLEIDKRGATKLQRWQHQIKEELKQQKEMVVFKARPNTVVHQEPFVPKKESRSLTDSLSGSMIQEGFELATAKRAKERQEFEKCLAEMEAQKSLLEEETRKQREEEEREEINQLRQELVHKAQPIRKFKAVEVKASDVPLTVPASPNFSDRFKC.

The tract at residues 36–167 (NAENIPPDQK…LTMPATPTVL (132 aa)) is disordered. Polar residues predominate over residues 47 to 56 (LSETSVNAEQ). Positions 85–103 (QTKRSARRMSKKHRQKILL) are enriched in basic residues. Residues 104 to 115 (KMKETHLEKETA) show a composition bias toward basic and acidic residues. The span at 141 to 152 (QPTSSHHGTTSP) shows a compositional bias: polar residues. At Ser204 the chain carries Phosphoserine; by plk1. Disordered regions lie at residues 260–291 (PPTSPVQVTKGGHTVPKPFNLSKGKRKHEEAS) and 314–337 (RSRQKEMEGPSPVKMLKPKLTNPK).

This sequence belongs to the TPX2 family. As to quaternary structure, associates with microtubules. Interacts with aurka and plk1. Interacts with kif15. Phosphorylated during mitosis. Hyperphosphorylated upon assembly of microtubules.

It is found in the nucleus. It localises to the cytoplasm. The protein resides in the cytoskeleton. The protein localises to the spindle. Its subcellular location is the spindle pole. Its function is as follows. Spindle assembly factor. Required for normal assembly of mitotic spindles. Mediates the binding kif15 and aurka to spindle microtubules. Required for targeting kif15 to microtubule minus ends. Activates aurka by promoting its autophosphorylation and protects the phosphorylated residue against dephosphorylation. This chain is Targeting protein for Xklp2-B (tpx2-b), found in Xenopus laevis (African clawed frog).